Reading from the N-terminus, the 398-residue chain is Succinate--CoA ligase [ADP-forming] subunit beta (398 aa).

Residues 9–254 (KRLLHEYGAP…ISEEDPKEIE (246 aa)) enclose the ATP-grasp domain. ATP contacts are provided by residues K46, 53–55 (GRG), E109, A112, and E117. Mg(2+)-binding residues include N209 and D223. Residues N274 and 331–333 (GIM) each bind substrate.

It belongs to the succinate/malate CoA ligase beta subunit family. In terms of assembly, heterotetramer of two alpha and two beta subunits. Requires Mg(2+) as cofactor.

It carries out the reaction succinate + ATP + CoA = succinyl-CoA + ADP + phosphate. The enzyme catalyses GTP + succinate + CoA = succinyl-CoA + GDP + phosphate. It participates in carbohydrate metabolism; tricarboxylic acid cycle; succinate from succinyl-CoA (ligase route): step 1/1. In terms of biological role, succinyl-CoA synthetase functions in the citric acid cycle (TCA), coupling the hydrolysis of succinyl-CoA to the synthesis of either ATP or GTP and thus represents the only step of substrate-level phosphorylation in the TCA. The beta subunit provides nucleotide specificity of the enzyme and binds the substrate succinate, while the binding sites for coenzyme A and phosphate are found in the alpha subunit. The chain is Succinate--CoA ligase [ADP-forming] subunit beta from Bartonella bacilliformis (strain ATCC 35685 / KC583 / Herrer 020/F12,63).